The chain runs to 409 residues: Putative competence-damage inducible protein (409 aa).

It belongs to the CinA family.

The protein is Putative competence-damage inducible protein of Clostridium botulinum (strain ATCC 19397 / Type A).